The primary structure comprises 372 residues: Glutamate 5-kinase (372 aa).

Lysine 14 contributes to the ATP binding site. Residues serine 54, aspartate 141, and asparagine 153 each coordinate substrate. ATP is bound at residue 173-174; that stretch reads TD. Residues 280-358 form the PUA domain; the sequence is RGTLVLDDGA…DAIEALLGYV (79 aa).

Belongs to the glutamate 5-kinase family.

It is found in the cytoplasm. It carries out the reaction L-glutamate + ATP = L-glutamyl 5-phosphate + ADP. It functions in the pathway amino-acid biosynthesis; L-proline biosynthesis; L-glutamate 5-semialdehyde from L-glutamate: step 1/2. In terms of biological role, catalyzes the transfer of a phosphate group to glutamate to form L-glutamate 5-phosphate. This chain is Glutamate 5-kinase, found in Pseudomonas paraeruginosa (strain DSM 24068 / PA7) (Pseudomonas aeruginosa (strain PA7)).